Consider the following 432-residue polypeptide: Glutamate-1-semialdehyde 2,1-aminomutase (432 aa).

Lys271 carries the post-translational modification N6-(pyridoxal phosphate)lysine.

The protein belongs to the class-III pyridoxal-phosphate-dependent aminotransferase family. HemL subfamily. As to quaternary structure, homodimer. It depends on pyridoxal 5'-phosphate as a cofactor.

It localises to the cytoplasm. It catalyses the reaction (S)-4-amino-5-oxopentanoate = 5-aminolevulinate. The protein operates within porphyrin-containing compound metabolism; protoporphyrin-IX biosynthesis; 5-aminolevulinate from L-glutamyl-tRNA(Glu): step 2/2. It participates in porphyrin-containing compound metabolism; chlorophyll biosynthesis. This is Glutamate-1-semialdehyde 2,1-aminomutase from Prochlorococcus marinus (strain NATL2A).